We begin with the raw amino-acid sequence, 318 residues long: MFLMNILCLVIPILLAMAFLTLVERKILGYMQLRKGPNIVGPYGLLQPIADAIKLFIKEPLRPLTSSKLMFTLAPTLAFTLALSLWIPMPMPHSLINLNLGVLFILALSSLAVYSILWSGWASNSKYALIGALRAVAQTISYEVTLAIILLSVMMMNGSFTLSTLTTTQEHMWLILPLWPLAMMWFISTLAETNRAPFDLTEGESELVSGFNVEYAAGPFALFFMAEYTNIIMMNALTATLFLGAFHNPLFPELFTVNFITKTLILTAIFLWVRASYPRFRYDQLMHLLWKSFLPLTLALCMLHVSIPALSAGVPPHM.

9 helical membrane passes run 2-22 (FLMN…FLTL), 37-57 (PNIV…KLFI), 69-89 (LMFT…WIPM), 100-120 (LGVL…LWSG), 136-156 (VAQT…VMMM), 171-191 (HMWL…STLA), 231-251 (IIMM…NPLF), 253-273 (ELFT…FLWV), and 293-313 (FLPL…LSAG).

It belongs to the complex I subunit 1 family. As to quaternary structure, core subunit of respiratory chain NADH dehydrogenase (Complex I) which is composed of 45 different subunits.

It is found in the mitochondrion inner membrane. It catalyses the reaction a ubiquinone + NADH + 5 H(+)(in) = a ubiquinol + NAD(+) + 4 H(+)(out). Functionally, core subunit of the mitochondrial membrane respiratory chain NADH dehydrogenase (Complex I) which catalyzes electron transfer from NADH through the respiratory chain, using ubiquinone as an electron acceptor. Essential for the catalytic activity and assembly of complex I. This is NADH-ubiquinone oxidoreductase chain 1 (MT-ND1) from Zaedyus pichiy (Pichi).